The primary structure comprises 125 residues: Small ribosomal subunit protein uS13 (125 aa).

This sequence belongs to the universal ribosomal protein uS13 family. Part of the 30S ribosomal subunit. Forms a loose heterodimer with protein S19. Forms two bridges to the 50S subunit in the 70S ribosome.

Its function is as follows. Located at the top of the head of the 30S subunit, it contacts several helices of the 16S rRNA. In the 70S ribosome it contacts the 23S rRNA (bridge B1a) and protein L5 of the 50S subunit (bridge B1b), connecting the 2 subunits; these bridges are implicated in subunit movement. Contacts the tRNAs in the A and P-sites. This chain is Small ribosomal subunit protein uS13, found in Granulibacter bethesdensis (strain ATCC BAA-1260 / CGDNIH1).